A 173-amino-acid chain; its full sequence is MTYFVLFLGLCFVLGGLAVASNPSPYYGVVGLVLASVAGCGWFLSLGASFVSLVLFMVYLGGMLVVFVYSVSLAADPFPEAWGDWQVIGYGMGFAMVLVVGVVIGGFVESWNFGVVTVDSVGMFSVRLDFSGVAMFYSWGAGMFLVAGWGLLLTLFVVLELVRGLSRGAIRAV.

The next 5 helical transmembrane spans lie at 1 to 21 (MTYFVLFLGLCFVLGGLAVAS), 27 to 47 (YGVVGLVLASVAGCGWFLSLG), 48 to 68 (ASFVSLVLFMVYLGGMLVVFV), 87 to 107 (VIGYGMGFAMVLVVGVVIGGF), and 139 to 159 (WGAGMFLVAGWGLLLTLFVVL).

It belongs to the complex I subunit 6 family.

It localises to the mitochondrion membrane. It catalyses the reaction a ubiquinone + NADH + 5 H(+)(in) = a ubiquinol + NAD(+) + 4 H(+)(out). Core subunit of the mitochondrial membrane respiratory chain NADH dehydrogenase (Complex I) that is believed to belong to the minimal assembly required for catalysis. Complex I functions in the transfer of electrons from NADH to the respiratory chain. The immediate electron acceptor for the enzyme is believed to be ubiquinone. The sequence is that of NADH-ubiquinone oxidoreductase chain 6 (MT-ND6) from Brachyramphus brevirostris (Kittlitz's murrelet).